A 31-amino-acid polypeptide reads, in one-letter code: GFLSTVKNLATNVAGTVLDTIRCKVTGGCRP.

An intrachain disulfide couples Cys-23 to Cys-29.

In terms of tissue distribution, expressed by the skin glands.

Its subcellular location is the secreted. Antimicrobial activity against Gram-negative bacterium E.coli. The chain is Palustrin-2a from Lithobates palustris (Pickerel frog).